A 301-amino-acid chain; its full sequence is Homoserine O-acetyltransferase (301 aa).

The active-site Acyl-thioester intermediate is cysteine 142. The substrate site is built by lysine 163 and serine 192. Residue histidine 235 is the Proton acceptor of the active site. The active site involves glutamate 237. Arginine 249 is a substrate binding site.

Belongs to the MetA family.

The protein localises to the cytoplasm. It catalyses the reaction L-homoserine + acetyl-CoA = O-acetyl-L-homoserine + CoA. Its pathway is amino-acid biosynthesis; L-methionine biosynthesis via de novo pathway; O-acetyl-L-homoserine from L-homoserine: step 1/1. Transfers an acetyl group from acetyl-CoA to L-homoserine, forming acetyl-L-homoserine. This Bacillus cytotoxicus (strain DSM 22905 / CIP 110041 / 391-98 / NVH 391-98) protein is Homoserine O-acetyltransferase.